The following is a 220-amino-acid chain: Vesicle-associated membrane protein 7 (220 aa).

Ala-2 bears the N-acetylalanine; partial mark. The Cytoplasmic portion of the chain corresponds to 2-188 (AILFAVVARG…ARAMCMKNLK (187 aa)). The Longin domain occupies 7–110 (VVARGTTILA…AMNSEFSSVL (104 aa)). Positions 125-185 (KVMETQAQVD…RNLARAMCMK (61 aa)) constitute a v-SNARE coiled-coil homology domain. A phosphoserine mark is found at Ser-167 and Ser-168. Residues 189-209 (LTIIIIIVSIVFIYIIVSPLC) form a helical; Anchor for type IV membrane protein membrane-spanning segment. The Vesicular segment spans residues 210-220 (GGFTWPSCVKK).

Belongs to the synaptobrevin family. In terms of assembly, component of the SNARE complex composed of STX4, SNAP23 and VAMP7 that binds SYT7 during lysosomal exocytosis. Component of the SNARE complex composed of STX7, STX8, VAMP7 and VTI1B that is required for heterotypic fusion of late endosomes with lysosomes. May interact with STX17. Interacts with PICALM. Interacts with RAB21. Detected in all tissues tested.

It localises to the cytoplasmic vesicle. It is found in the secretory vesicle membrane. Its subcellular location is the golgi apparatus. The protein resides in the trans-Golgi network membrane. The protein localises to the late endosome membrane. It localises to the lysosome membrane. It is found in the endoplasmic reticulum membrane. Its subcellular location is the phagosome membrane. The protein resides in the synapse. The protein localises to the synaptosome. Involved in the targeting and/or fusion of transport vesicles to their target membrane during transport of proteins from the early endosome to the lysosome. Required for heterotypic fusion of late endosomes with lysosomes and homotypic lysosomal fusion. Required for calcium regulated lysosomal exocytosis. Involved in the export of chylomicrons from the endoplasmic reticulum to the cis Golgi. Required for exocytosis of mediators during eosinophil and neutrophil degranulation, and target cell killing by natural killer cells. Required for focal exocytosis of late endocytic vesicles during phagosome formation. The sequence is that of Vesicle-associated membrane protein 7 (VAMP7) from Homo sapiens (Human).